Reading from the N-terminus, the 92-residue chain is Large ribosomal subunit protein eL37 (92 aa).

Positions 19, 22, 34, and 37 each coordinate Zn(2+). The C4-type zinc-finger motif lies at 19–37 (CRRCGRRSYHIQKSTCANC). The interval 50–92 (SEKAKRRKTTGSGRTAHLRDVHRRFKNGFQVGTPKGARGPENH) is disordered.

It belongs to the eukaryotic ribosomal protein eL37 family. It depends on Zn(2+) as a cofactor.

Binds to the 23S rRNA. This Emericella nidulans (strain FGSC A4 / ATCC 38163 / CBS 112.46 / NRRL 194 / M139) (Aspergillus nidulans) protein is Large ribosomal subunit protein eL37 (rpl37).